A 1007-amino-acid chain; its full sequence is Kinesin-like protein KIN-14F (1007 aa).

The region spanning 41 to 187 (AARRNEAAGW…CVLALKSYGD (147 aa)) is the Calponin-homology (CH) domain. A Kinesin motor domain is found at 390–715 (SIRVYCRVRP…LKFAERVSTV (326 aa)). 472–479 (GQTGSGKT) is a binding site for ATP. The stretch at 718–748 (GAARLNKESGEVKELKEQIARLKSSLAMKDS) forms a coiled coil. Over residues 885 to 904 (KQYLRNNSRKKDGNEFEQQR) the composition is skewed to basic and acidic residues. Disordered stretches follow at residues 885–924 (KQYL…ATSD) and 944–1007 (SENG…AGTK). Residues 963–1001 (TRTPLHSQIPSASRKTSNGNRSGRQPLSGSDSRRLSSNG) are compositionally biased toward polar residues.

It belongs to the TRAFAC class myosin-kinesin ATPase superfamily. Kinesin family. KIN-14 subfamily.

This chain is Kinesin-like protein KIN-14F, found in Oryza sativa subsp. japonica (Rice).